A 199-amino-acid chain; its full sequence is VAMP-like protein YKT62 (199 aa).

Residues 7–131 form the Longin domain; that stretch reads LVLKCDPETR…PYLKEASDKF (125 aa). One can recognise a v-SNARE coiled-coil homology domain in the interval 139-199; sequence KLLKIQRELD…KKTNSCCTLL (61 aa). C195 carries the S-palmitoyl cysteine lipid modification. C196 bears the Cysteine methyl ester mark. C196 carries the S-geranylgeranyl cysteine lipid modification. The propeptide at 197-199 is removed in mature form; it reads TLL.

Belongs to the synaptobrevin family. As to quaternary structure, interacts with SYP41. Core constituent of the SNARE complex required for membrane fusion at the trans-Golgi network.

The protein resides in the cell membrane. In terms of biological role, involved in the secretory pathway. Essential for membrane fusion mediated by either SYP41 or SYP61; triggers the fusion of phospholipid vesicles containing SYP41 or SYP61 and VTI12. This Arabidopsis thaliana (Mouse-ear cress) protein is VAMP-like protein YKT62.